We begin with the raw amino-acid sequence, 227 residues long: Enolase-phosphatase E1 (227 aa).

The Mg(2+) site is built by Asp11 and Glu13. Residues 118–119 (SS) and Lys161 each bind substrate. Position 186 (Asp186) interacts with Mg(2+).

Belongs to the HAD-like hydrolase superfamily. MasA/MtnC family. As to quaternary structure, monomer. Mg(2+) serves as cofactor.

The protein localises to the cytoplasm. The protein resides in the nucleus. The enzyme catalyses 5-methylsulfanyl-2,3-dioxopentyl phosphate + H2O = 1,2-dihydroxy-5-(methylsulfanyl)pent-1-en-3-one + phosphate. Its pathway is amino-acid biosynthesis; L-methionine biosynthesis via salvage pathway; L-methionine from S-methyl-5-thio-alpha-D-ribose 1-phosphate: step 3/6. It participates in amino-acid biosynthesis; L-methionine biosynthesis via salvage pathway; L-methionine from S-methyl-5-thio-alpha-D-ribose 1-phosphate: step 4/6. Functionally, bifunctional enzyme that catalyzes the enolization of 2,3-diketo-5-methylthiopentyl-1-phosphate (DK-MTP-1-P) into the intermediate 2-hydroxy-3-keto-5-methylthiopentenyl-1-phosphate (HK-MTPenyl-1-P), which is then dephosphorylated to form the acireductone 1,2-dihydroxy-3-keto-5-methylthiopentene (DHK-MTPene). The chain is Enolase-phosphatase E1 from Saccharomyces cerevisiae (strain ATCC 204508 / S288c) (Baker's yeast).